A 184-amino-acid polypeptide reads, in one-letter code: Copper transporter 6 (184 aa).

A compositionally biased stretch (low complexity) spans 1–25 (MRGMGDDGMGPMAMAPPRSGHATAA). Residues 1–27 (MRGMGDDGMGPMAMAPPRSGHATAAAP) are disordered. The next 2 membrane-spanning stretches (helical) occupy residues 64–84 (YALCLLFVLALAALTEGLSVL) and 124–144 (MAYLVMLAVMSFNVGVLLAAV).

The protein belongs to the copper transporter (Ctr) (TC 1.A.56) family. SLC31A subfamily.

The protein resides in the membrane. In terms of biological role, involved in the transport of copper. The sequence is that of Copper transporter 6 (COPT6) from Oryza sativa subsp. japonica (Rice).